The primary structure comprises 492 residues: Ketol-acid reductoisomerase (NADP(+)) (492 aa).

In terms of domain architecture, KARI N-terminal Rossmann spans 14-208 (LDQLGKCRFM…GGHRAGVLQS (195 aa)). NADP(+)-binding positions include 45 to 48 (CGAQ), Arg68, Arg76, Ser78, and 108 to 110 (DKQ). His132 is a catalytic residue. NADP(+) is bound at residue Gly158. KARI C-terminal knotted domains follow at residues 209-344 (SFVA…NAPQ) and 345-485 (FDGK…MKDM). Asp217, Glu221, Glu389, and Glu393 together coordinate Mg(2+). Ser414 provides a ligand contact to substrate.

It belongs to the ketol-acid reductoisomerase family. Mg(2+) serves as cofactor.

It catalyses the reaction (2R)-2,3-dihydroxy-3-methylbutanoate + NADP(+) = (2S)-2-acetolactate + NADPH + H(+). The enzyme catalyses (2R,3R)-2,3-dihydroxy-3-methylpentanoate + NADP(+) = (S)-2-ethyl-2-hydroxy-3-oxobutanoate + NADPH + H(+). It functions in the pathway amino-acid biosynthesis; L-isoleucine biosynthesis; L-isoleucine from 2-oxobutanoate: step 2/4. Its pathway is amino-acid biosynthesis; L-valine biosynthesis; L-valine from pyruvate: step 2/4. Involved in the biosynthesis of branched-chain amino acids (BCAA). Catalyzes an alkyl-migration followed by a ketol-acid reduction of (S)-2-acetolactate (S2AL) to yield (R)-2,3-dihydroxy-isovalerate. In the isomerase reaction, S2AL is rearranged via a Mg-dependent methyl migration to produce 3-hydroxy-3-methyl-2-ketobutyrate (HMKB). In the reductase reaction, this 2-ketoacid undergoes a metal-dependent reduction by NADPH to yield (R)-2,3-dihydroxy-isovalerate. This is Ketol-acid reductoisomerase (NADP(+)) from Pectobacterium carotovorum subsp. carotovorum (strain PC1).